The primary structure comprises 3242 residues: tRNA nuclease CdiA (3242 aa).

The N-terminal stretch at Met1–Ala32 is a signal peptide. Residues Pro36–Thr322 are two-partner system transport domain (TPS). The segment at Gly351–Asn1376 is FHA-1. The segment at Gln1377–Trp1668 is receptor-binding domain (RBD). The interval Trp1668–Asn1852 is YP domain. The periplasmic FHA-1 repeat (pFR) stretch occupies residues Gly1853–Asn1913. Residues Asp2021–Ser2631 form an FHA-2 region. The segment covering Arg2075–His2091 has biased composition (basic and acidic residues). Disordered stretches follow at residues Arg2075 to Val2094, Gly2310 to Gly2333, and Thr2439 to Asn2481. Polar residues predominate over residues Gly2322–Gly2333. The segment at Gly2969 to Ile3242 is DUF638-CT domain; not toxic when added to the outside of E.coli, does not interfere with F-pilus mediated conjugation, toxic when expressed intracellularly. A pre-toxin (PT) domain region spans residues Pro2972 to Val3015. A VENN CT cleavage motif motif is present at residues Val3016–Asn3019. The toxin import domain; sufficient to import the tRNA nuclease domain of colicin E5 into E.coli, may bind F-pili stretch occupies residues Val3016 to Tyr3097. The interval Val3016–Ile3242 is CT domain; toxic when added to the outside of E.coli and when expressed intracellularly. The segment at Ala3020–Glu3141 is inner membrane translocation domain (IMTD), targets protein to FtsH. Positions Ala3020 to Ile3242 are C-terminal effector domain (CT). The interval Gly3098–Ile3242 is tRNase function, does not interfere with F-pilus mediated conjugation. The tract at residues Lys3116 to Lys3146 is disordered. Positions Asn3134 to Lys3146 are enriched in basic and acidic residues. Residues Lys3137–Lys3238 are a coiled coil. Catalysis depends on residues Asp3170, His3193, and Glu3196.

The protein in the N-terminal section; belongs to the CdiA toxin family. In terms of assembly, the C-terminal (CT) domain interacts with cognate CdiI but not non-cognate CdiI from D.dadantii strain 3937. CdiA-CT also interacts with CysK; this is blocked upon preincubation with O-acetyl-L-serine. CysK forms a complex with CdiA-CT/CdiI. One CdiA toxin subunit binds to each subunit of the CysK homodimer, and one CdiI immunity protein binds to each toxin subunit; the immune complex is thus a dimer of trimers. The 4 C-terminal residues of CdiA fit into the active site of CysK. A divalent metal cation is required as a cofactor.

The protein localises to the secreted. It is found in the target cell membrane. Its subcellular location is the target cell. It localises to the target cell cytoplasm. Toxic component of a toxin-immunity protein module, which functions as a cellular contact-dependent growth inhibition (CDI) system. CDI modules allow bacteria to communicate with and inhibit the growth of closely related neighboring bacteria in a contact-dependent fashion (target cell counts decrease 100- to 1000-fold). CdiA toxicity is neutralized by its cognate immunity protein CdiI, but not by CdiI from other bacteria. Uses heterotrimeric OmpC and OmpF as target cell outer membrane receptors; receptor function depends on polymorphisms in extracellular loops L4 and L5 of OmpC; interacts with itself and closely related bacteria but also with OmpC from E.cloacae ATCC 13047. Its ability to preferentially bind to 'self' receptors suggests it may also play a role in self-recognition and kin selection. A bamA mutation that decreases its expression about 5-fold is partially resistant to this strain of CdiA, probably due to decreased outer membrane receptor protein assembly. Isolated CdiA-CT is imported in an F-pilus-mediated fashion; CdiA-CT inhibits F-mediated conjugation, probably via its N-terminus (residues 3016-3097), although it is not clear if this is physiologically significant. Gains access to the cytoplasm of target cells by using integral inner membrane protein FtsH. The C-terminal domain (CT) cleaves within tRNA anticodon loops; this activity is inhibited by cognate CdiI. tRNase activity of CdiA-CT is stimulated by CysK, although the extreme C-terminus (residues 3098-3242) has tRNase activity in the absence of CysK. In vivo CDI toxicity requires CysK. CysK stabilizes CdiA-CT, allowing it to bind tRNA substrate; neither CdiA-CT nor CysK bind tRNA alone in vitro. Purified CdiA-CT (residues 3016-3242) inhibits E.coli cell growth when added to cultures alone or in complex with cognate CdiI, growth is inhibited when cognate CdiI is present within the cell but not when a CdiA-CT/CdiI complex is added extracellularly, suggesting CdiA-CT alone but not the CdiA-CT/CdiI complex is imported into the target cell. Its function is as follows. The CdiA protein is thought to be exported from the cell through the central lumen of CdiB, the other half of its two-partner system (TPS). The TPS domain probably remains associated with CdiB while the FHA-1 domain forms an extended filament with the receptor-binding domain (RBD) at its extremity; in the secretion arrested state the C-terminus of the RBD and YP domains form a hairpin-like structure as the FHA-2, PT and CT domains are periplasmic. The YP domain is probably responsible for this arrest at the point where it re-enters the host cell periplasm. Upon binding to a target cell outer membrane receptor (heterotrimeric OmpC-OmpF for this CDI) a signal is transmitted to activate secretion. The filament elongates slightly, the rest of CdiA is secreted and the FHA-2 domain becomes stably associated with the target cell's outer membrane where it facilitates entry of the toxic CT domain into the target cell periplasm. From there the toxic CT domain is cleaved and gains access to the target cell cytoplasm via an inner membrane protein (FtsH for this CDI). This is tRNA nuclease CdiA from Escherichia coli O6:K15:H31 (strain 536 / UPEC).